A 334-amino-acid chain; its full sequence is Protein-methionine-sulfoxide reductase catalytic subunit MsrP (334 aa).

Positions methionine 1 to alanine 44 form a signal peptide, tat-type signal. Residues asparagine 88, tyrosine 91–glutamate 92, cysteine 146, threonine 181, asparagine 233, arginine 238, and glycine 249–lysine 251 contribute to the Mo-molybdopterin site.

This sequence belongs to the MsrP family. As to quaternary structure, heterodimer of a catalytic subunit (MsrP) and a heme-binding subunit (MsrQ). Mo-molybdopterin serves as cofactor. Post-translationally, predicted to be exported by the Tat system. The position of the signal peptide cleavage has not been experimentally proven.

The protein resides in the periplasm. It catalyses the reaction L-methionyl-[protein] + a quinone + H2O = L-methionyl-(S)-S-oxide-[protein] + a quinol. The enzyme catalyses L-methionyl-[protein] + a quinone + H2O = L-methionyl-(R)-S-oxide-[protein] + a quinol. Part of the MsrPQ system that repairs oxidized periplasmic proteins containing methionine sulfoxide residues (Met-O), using respiratory chain electrons. Thus protects these proteins from oxidative-stress damage caused by reactive species of oxygen and chlorine generated by the host defense mechanisms. MsrPQ is essential for the maintenance of envelope integrity under bleach stress, rescuing a wide series of structurally unrelated periplasmic proteins from methionine oxidation, including the primary periplasmic chaperone SurA and the lipoprotein Pal. The catalytic subunit MsrP is non-stereospecific, being able to reduce both (R-) and (S-) diastereoisomers of methionine sulfoxide. This Salmonella dublin (strain CT_02021853) protein is Protein-methionine-sulfoxide reductase catalytic subunit MsrP.